The following is a 292-amino-acid chain: Homoserine kinase (292 aa).

ATP is bound at residue 84-94 (PFSRGLGSSSA).

Belongs to the GHMP kinase family. Homoserine kinase subfamily.

The protein localises to the cytoplasm. It carries out the reaction L-homoserine + ATP = O-phospho-L-homoserine + ADP + H(+). Its pathway is amino-acid biosynthesis; L-threonine biosynthesis; L-threonine from L-aspartate: step 4/5. Its function is as follows. Catalyzes the ATP-dependent phosphorylation of L-homoserine to L-homoserine phosphate. The protein is Homoserine kinase of Campylobacter hominis (strain ATCC BAA-381 / DSM 21671 / CCUG 45161 / LMG 19568 / NCTC 13146 / CH001A).